The chain runs to 144 residues: Superoxide dismutase [Mn], mitochondrial (144 aa).

Residues H10, H58, and D143 each contribute to the Mn(2+) site.

Belongs to the iron/manganese superoxide dismutase family. Homotetramer. The cofactor is Mn(2+).

The protein localises to the mitochondrion matrix. It catalyses the reaction 2 superoxide + 2 H(+) = H2O2 + O2. Destroys superoxide anion radicals which are normally produced within the cells and which are toxic to biological systems. The protein is Superoxide dismutase [Mn], mitochondrial of Eptatretus stoutii (Pacific hagfish).